Here is a 328-residue protein sequence, read N- to C-terminus: L-tyrosine isonitrile synthase (328 aa).

It belongs to the isocyanide synthase family. Monomer in solution.

It carries out the reaction D-ribulose 5-phosphate + L-tyrosine = (2S)-3-(4-hydroxyphenyl)-2-isocyanopropanoate + hydroxyacetone + formaldehyde + phosphate + H2O + H(+). Its function is as follows. Involved in the biosynthesis of paerucumarin, a cyclized isocyano derivative of tyrosine. Responsible for the synthesis of the isonitrile group on tyrosine using the C2 of ribulose 5-phosphate as the source of the carbon atom. The chain is L-tyrosine isonitrile synthase from Pseudomonas aeruginosa (strain ATCC 15692 / DSM 22644 / CIP 104116 / JCM 14847 / LMG 12228 / 1C / PRS 101 / PAO1).